The sequence spans 230 residues: Cytochrome c oxidase subunit 2 (230 aa).

Residues 1 to 14 (MAHPSQLGFQDAAS) lie on the Mitochondrial intermembrane side of the membrane. Residues 15 to 45 (PVMEELLHFHDHALMIVLLISTLVLYIIVAM) traverse the membrane as a helical segment. Residues 46 to 59 (VSTKLTNMYILDSQ) are Mitochondrial matrix-facing. A helical transmembrane segment spans residues 60–87 (EIEIVWTVLPAVILILIALPSLRILYLM). Topologically, residues 88-230 (DEINDPHLTI…KWSTMMLEDA (143 aa)) are mitochondrial intermembrane. The Cu cation site is built by His161, Cys196, Glu198, Cys200, His204, and Met207. Glu198 serves as a coordination point for Mg(2+).

It belongs to the cytochrome c oxidase subunit 2 family. Component of the cytochrome c oxidase (complex IV, CIV), a multisubunit enzyme composed of 14 subunits. The complex is composed of a catalytic core of 3 subunits MT-CO1, MT-CO2 and MT-CO3, encoded in the mitochondrial DNA, and 11 supernumerary subunits COX4I, COX5A, COX5B, COX6A, COX6B, COX6C, COX7A, COX7B, COX7C, COX8 and NDUFA4, which are encoded in the nuclear genome. The complex exists as a monomer or a dimer and forms supercomplexes (SCs) in the inner mitochondrial membrane with NADH-ubiquinone oxidoreductase (complex I, CI) and ubiquinol-cytochrome c oxidoreductase (cytochrome b-c1 complex, complex III, CIII), resulting in different assemblies (supercomplex SCI(1)III(2)IV(1) and megacomplex MCI(2)III(2)IV(2)). Found in a complex with TMEM177, COA6, COX18, COX20, SCO1 and SCO2. Interacts with TMEM177 in a COX20-dependent manner. Interacts with COX20. Interacts with COX16. It depends on Cu cation as a cofactor.

The protein resides in the mitochondrion inner membrane. It catalyses the reaction 4 Fe(II)-[cytochrome c] + O2 + 8 H(+)(in) = 4 Fe(III)-[cytochrome c] + 2 H2O + 4 H(+)(out). Component of the cytochrome c oxidase, the last enzyme in the mitochondrial electron transport chain which drives oxidative phosphorylation. The respiratory chain contains 3 multisubunit complexes succinate dehydrogenase (complex II, CII), ubiquinol-cytochrome c oxidoreductase (cytochrome b-c1 complex, complex III, CIII) and cytochrome c oxidase (complex IV, CIV), that cooperate to transfer electrons derived from NADH and succinate to molecular oxygen, creating an electrochemical gradient over the inner membrane that drives transmembrane transport and the ATP synthase. Cytochrome c oxidase is the component of the respiratory chain that catalyzes the reduction of oxygen to water. Electrons originating from reduced cytochrome c in the intermembrane space (IMS) are transferred via the dinuclear copper A center (CU(A)) of subunit 2 and heme A of subunit 1 to the active site in subunit 1, a binuclear center (BNC) formed by heme A3 and copper B (CU(B)). The BNC reduces molecular oxygen to 2 water molecules using 4 electrons from cytochrome c in the IMS and 4 protons from the mitochondrial matrix. This chain is Cytochrome c oxidase subunit 2 (mt-co2), found in Oncorhynchus mykiss (Rainbow trout).